The primary structure comprises 267 residues: Interleukin-2 receptor subunit alpha (267 aa).

Residues 1-21 (MEPHLLMLGFLSFTIVPGCWA) form the signal peptide. In terms of domain architecture, Sushi 1 spans 22-79 (ELCLYDPPEVPNATFKALSYKNGTILNCECKRGFRRLNELVYMACLGNSWSNNCQCTS). The Extracellular segment spans residues 22-235 (ELCLYDPPEV…ETFVFTKEYQ (214 aa)). Cystine bridges form between cysteine 24-cysteine 66, cysteine 49-cysteine 75, and cysteine 51-cysteine 77. 2 N-linked (GlcNAc...) asparagine glycosylation sites follow: asparagine 33 and asparagine 43. Over residues 82-93 (HDNSREQVTPQP) the composition is skewed to polar residues. Residues 82–108 (HDNSREQVTPQPEGQKEQQTTDTQKST) are disordered. The span at 98-108 (EQQTTDTQKST) shows a compositional bias: low complexity. In terms of domain architecture, Sushi 2 spans 118 to 181 (GHCREPPPWR…WTHPQLTCVD (64 aa)). Intrachain disulfides connect cysteine 120–cysteine 163 and cysteine 147–cysteine 179. The disordered stretch occupies residues 191–215 (SEESQGSRNSFPESEASCPTPNTDF). Residues 192–215 (EESQGSRNSFPESEASCPTPNTDF) are compositionally biased toward polar residues. A helical membrane pass occupies residues 236-256 (VAVASCIFLLLSILLLSGFTW). Over 257-267 (QHRWRKSRRTI) the chain is Cytoplasmic.

As to quaternary structure, non-covalent dimer of an alpha and a beta subunit. IL2R exists in 3 different forms: a high affinity dimer, an intermediate affinity monomer (beta subunit), and a low affinity monomer (alpha subunit). The high and intermediate affinity forms also associate with a gamma subunit.

It localises to the membrane. Its function is as follows. Receptor for interleukin-2. The receptor is involved in the regulation of immune tolerance by controlling regulatory T cells (TREGs) activity. TREGs suppress the activation and expansion of autoreactive T-cells. The sequence is that of Interleukin-2 receptor subunit alpha (Il2ra) from Rattus norvegicus (Rat).